The sequence spans 156 residues: ATP synthase subunit b (156 aa).

A helical transmembrane segment spans residues 3–23 (ITFTIFAQSLAFAALIWIVAT).

It belongs to the ATPase B chain family. In terms of assembly, F-type ATPases have 2 components, F(1) - the catalytic core - and F(0) - the membrane proton channel. F(1) has five subunits: alpha(3), beta(3), gamma(1), delta(1), epsilon(1). F(0) has three main subunits: a(1), b(2) and c(10-14). The alpha and beta chains form an alternating ring which encloses part of the gamma chain. F(1) is attached to F(0) by a central stalk formed by the gamma and epsilon chains, while a peripheral stalk is formed by the delta and b chains.

The protein localises to the cell inner membrane. F(1)F(0) ATP synthase produces ATP from ADP in the presence of a proton or sodium gradient. F-type ATPases consist of two structural domains, F(1) containing the extramembraneous catalytic core and F(0) containing the membrane proton channel, linked together by a central stalk and a peripheral stalk. During catalysis, ATP synthesis in the catalytic domain of F(1) is coupled via a rotary mechanism of the central stalk subunits to proton translocation. Its function is as follows. Component of the F(0) channel, it forms part of the peripheral stalk, linking F(1) to F(0). This is ATP synthase subunit b from Xylella fastidiosa (strain 9a5c).